Consider the following 352-residue polypeptide: tRNA N6-adenosine threonylcarbamoyltransferase (352 aa).

The a divalent metal cation site is built by histidine 114, histidine 118, and tyrosine 135. Residues 135 to 139 (YVSGG), aspartate 167, glycine 182, glutamate 186, and asparagine 283 each bind substrate. Residue aspartate 311 participates in a divalent metal cation binding.

This sequence belongs to the KAE1 / TsaD family. In terms of assembly, component of the EKC/KEOPS complex composed of at least BUD32, CGI121, GON7, KAE1 and PCC1; the whole complex dimerizes. A divalent metal cation is required as a cofactor.

It is found in the cytoplasm. Its subcellular location is the nucleus. The catalysed reaction is L-threonylcarbamoyladenylate + adenosine(37) in tRNA = N(6)-L-threonylcarbamoyladenosine(37) in tRNA + AMP + H(+). Functionally, component of the EKC/KEOPS complex that is required for the formation of a threonylcarbamoyl group on adenosine at position 37 (t(6)A37) in tRNAs that read codons beginning with adenine. The complex is probably involved in the transfer of the threonylcarbamoyl moiety of threonylcarbamoyl-AMP (TC-AMP) to the N6 group of A37. KAE1 likely plays a direct catalytic role in this reaction, but requires other protein(s) of the complex to fulfill this activity. The EKC/KEOPS complex also promotes both telomere uncapping and telomere elongation. The complex is required for efficient recruitment of transcriptional coactivators. This chain is tRNA N6-adenosine threonylcarbamoyltransferase, found in Phaeosphaeria nodorum (strain SN15 / ATCC MYA-4574 / FGSC 10173) (Glume blotch fungus).